The sequence spans 484 residues: uncharacterized protein (484 aa).

It to M.thermoautotrophicum MTH1153.

This is an uncharacterized protein from Methanocaldococcus jannaschii (strain ATCC 43067 / DSM 2661 / JAL-1 / JCM 10045 / NBRC 100440) (Methanococcus jannaschii).